Here is a 224-residue protein sequence, read N- to C-terminus: Putative O-methyltransferase MUL_4520 (224 aa).

Polar residues predominate over residues 1 to 11 (MHGTDSSSDTP). A disordered region spans residues 1–20 (MHGTDSSSDTPGQPAPSRAE). S-adenosyl-L-methionine is bound by residues Val-51, Glu-73, 75-76 (GT), Ser-81, Asp-99, and Ile-100. Asp-147 serves as a coordination point for substrate. S-adenosyl-L-methionine is bound at residue Asp-149.

This sequence belongs to the class I-like SAM-binding methyltransferase superfamily. Cation-dependent O-methyltransferase family.

The chain is Putative O-methyltransferase MUL_4520 from Mycobacterium ulcerans (strain Agy99).